An 878-amino-acid chain; its full sequence is Probable receptor-like protein kinase At4g39110 (878 aa).

A signal peptide spans 1–43 (MEIRKKPNIFTVLVIDFSSKPSMALLLAILLFLSGPSASAVAA). Over 44–440 (AAVGPATGFK…GRTTGMGKHG (397 aa)) the chain is Extracellular. Residues Asn-170, Asn-183, Asn-254, Asn-317, and Asn-382 are each glycosylated (N-linked (GlcNAc...) asparagine). Residues 441–461 (MVATAGFVMMFGAFIGLGAMV) traverse the membrane as a helical segment. Residues 462-878 (YKWKKRPQDW…FTQFANLNGR (417 aa)) are Cytoplasmic-facing. One can recognise a Protein kinase domain in the interval 526 to 798 (FEASQIIGVG…GDVLWNLEYA (273 aa)). ATP-binding positions include 532 to 540 (IGVGGFGNV) and Lys-554. The active-site Proton acceptor is the Asp-650. The disordered stretch occupies residues 808 to 844 (GKAEETENAKPDVVTPGSVPVSDPSPITPSVTTNEAA).

Belongs to the protein kinase superfamily. Ser/Thr protein kinase family.

It is found in the membrane. This is Probable receptor-like protein kinase At4g39110 from Arabidopsis thaliana (Mouse-ear cress).